The sequence spans 159 residues: Small ribosomal subunit protein uS9 (159 aa).

It belongs to the universal ribosomal protein uS9 family.

The protein is Small ribosomal subunit protein uS9 of Bradyrhizobium diazoefficiens (strain JCM 10833 / BCRC 13528 / IAM 13628 / NBRC 14792 / USDA 110).